Here is a 201-residue protein sequence, read N- to C-terminus: Peptidyl-tRNA hydrolase (201 aa).

Y15 is a binding site for tRNA. H20 serves as the catalytic Proton acceptor. Positions 66, 68, and 114 each coordinate tRNA.

It belongs to the PTH family. Monomer.

Its subcellular location is the cytoplasm. It catalyses the reaction an N-acyl-L-alpha-aminoacyl-tRNA + H2O = an N-acyl-L-amino acid + a tRNA + H(+). In terms of biological role, hydrolyzes ribosome-free peptidyl-tRNAs (with 1 or more amino acids incorporated), which drop off the ribosome during protein synthesis, or as a result of ribosome stalling. Catalyzes the release of premature peptidyl moieties from peptidyl-tRNA molecules trapped in stalled 50S ribosomal subunits, and thus maintains levels of free tRNAs and 50S ribosomes. The protein is Peptidyl-tRNA hydrolase of Burkholderia mallei (strain NCTC 10247).